Here is a 352-residue protein sequence, read N- to C-terminus: Protein RecA (352 aa).

67 to 74 contributes to the ATP binding site; it reads GPESSGKT. The interval 330 to 352 is disordered; the sequence is STPKPEAESQEKAAAAQDDDSLV.

Belongs to the RecA family.

The protein localises to the cytoplasm. Its function is as follows. Can catalyze the hydrolysis of ATP in the presence of single-stranded DNA, the ATP-dependent uptake of single-stranded DNA by duplex DNA, and the ATP-dependent hybridization of homologous single-stranded DNAs. It interacts with LexA causing its activation and leading to its autocatalytic cleavage. In Chromohalobacter salexigens (strain ATCC BAA-138 / DSM 3043 / CIP 106854 / NCIMB 13768 / 1H11), this protein is Protein RecA.